The chain runs to 465 residues: Cysteine--tRNA ligase (465 aa).

Residue cysteine 27 participates in Zn(2+) binding. Positions 29 to 39 (PTVYDDAHLGH) match the 'HIGH' region motif. The Zn(2+) site is built by cysteine 207, histidine 237, and glutamate 241. Residues 269–273 (KMSKS) carry the 'KMSKS' region motif. Lysine 272 is a binding site for ATP.

Belongs to the class-I aminoacyl-tRNA synthetase family. Monomer. Zn(2+) is required as a cofactor.

It is found in the cytoplasm. The enzyme catalyses tRNA(Cys) + L-cysteine + ATP = L-cysteinyl-tRNA(Cys) + AMP + diphosphate. The sequence is that of Cysteine--tRNA ligase (cysS) from Helicobacter pylori (strain J99 / ATCC 700824) (Campylobacter pylori J99).